Reading from the N-terminus, the 122-residue chain is FMN-binding protein (122 aa).

Monomer and homodimer. The cofactor is FMN.

It is found in the cytoplasm. Functionally, functions as a redox protein with a potential of -325 mV. The polypeptide is FMN-binding protein (Nitratidesulfovibrio vulgaris (strain DSM 19637 / Miyazaki F) (Desulfovibrio vulgaris)).